The sequence spans 177 residues: UPF0114 protein jhp_0175 (177 aa).

Helical transmembrane passes span 15-35 (WLLA…GYVF), 54-74 (LVLS…VLMV), and 145-165 (PIFW…LTAV).

This sequence belongs to the UPF0114 family.

The protein localises to the cell membrane. The chain is UPF0114 protein jhp_0175 from Helicobacter pylori (strain J99 / ATCC 700824) (Campylobacter pylori J99).